The sequence spans 587 residues: Arginine--tRNA ligase (587 aa).

The 'HIGH' region signature appears at 126-136 (ANPTGPLHVGH).

The protein belongs to the class-I aminoacyl-tRNA synthetase family. In terms of assembly, monomer.

It is found in the cytoplasm. The catalysed reaction is tRNA(Arg) + L-arginine + ATP = L-arginyl-tRNA(Arg) + AMP + diphosphate. The chain is Arginine--tRNA ligase from Azoarcus sp. (strain BH72).